Reading from the N-terminus, the 724-residue chain is Probable dipeptidyl-peptidase 5 (724 aa).

Positions 1–19 (MGALTWLSVVAAAASTALA) are cleaved as a signal peptide. 6 N-linked (GlcNAc...) asparagine glycosylation sites follow: Asn76, Asn97, Asn154, Asn257, Asn383, and Asn453. The active-site Charge relay system is Ser563. Asn610 carries N-linked (GlcNAc...) asparagine glycosylation. Residues Asp646 and His678 each act as charge relay system in the active site.

Belongs to the peptidase S9C family.

The protein localises to the secreted. Functionally, extracellular dipeptidyl-peptidase which removes N-terminal dipeptides sequentially from polypeptides having unsubstituted N-termini. The polypeptide is Probable dipeptidyl-peptidase 5 (dpp5) (Aspergillus clavatus (strain ATCC 1007 / CBS 513.65 / DSM 816 / NCTC 3887 / NRRL 1 / QM 1276 / 107)).